The primary structure comprises 296 residues: Cytidine deaminase (296 aa).

CMP/dCMP-type deaminase domains lie at 47 to 167 and 186 to 296; these read SQDE…FGPA and ESAD…VDPV. 88–90 lines the substrate pocket; sequence NLE. Residue His-101 coordinates Zn(2+). The Proton donor role is filled by Glu-103. The Zn(2+) site is built by Cys-128 and Cys-131.

The protein belongs to the cytidine and deoxycytidylate deaminase family. In terms of assembly, homodimer. It depends on Zn(2+) as a cofactor.

It catalyses the reaction cytidine + H2O + H(+) = uridine + NH4(+). It carries out the reaction 2'-deoxycytidine + H2O + H(+) = 2'-deoxyuridine + NH4(+). This enzyme scavenges exogenous and endogenous cytidine and 2'-deoxycytidine for UMP synthesis. In Shewanella loihica (strain ATCC BAA-1088 / PV-4), this protein is Cytidine deaminase.